We begin with the raw amino-acid sequence, 244 residues long: MAMVPRVLVVDDDPVIRELLQAYLGEEGYDVLCAGNAEQAEACLAECAHLGQPVELVLLDIRLPGKDGLTLTRELRVRSEVGIILITGRNDEIDRIVGLECGADDYVIKPLNPRELVSRAKNLIRRVRHAQASAGPARQALRQFGDWLLDADRRRLIDHAGNETLLTHGEFQLLGAFLRNSGHTLSRDQLMDQIRNREWLPSDRSIDVLVGRLRRKLRDDPAEPQLIITIHGAGYLFTAAASDA.

Positions 6-124 (RVLVVDDDPV…ELVSRAKNLI (119 aa)) constitute a Response regulatory domain. 4-aspartylphosphate is present on aspartate 60. The segment at residues 139–239 (QALRQFGDWL…IHGAGYLFTA (101 aa)) is a DNA-binding region (ompR/PhoB-type).

In terms of processing, phosphorylated by AruS.

It localises to the cytoplasm. The protein operates within amino-acid degradation; L-arginine degradation [regulation]. Functionally, member of the two-component regulatory system AruS/AruR, which is involved in the regulation of the arginine transaminase (ATA) pathway in response to exogeneous L-arginine. Regulates transcription of aruH and aruI. The chain is Transcriptional regulatory protein AruR (aruR) from Pseudomonas aeruginosa (strain ATCC 15692 / DSM 22644 / CIP 104116 / JCM 14847 / LMG 12228 / 1C / PRS 101 / PAO1).